The chain runs to 419 residues: Innexin-2 (419 aa).

4 helical membrane-spanning segments follow: residues 33–53 (AWFT…KQYF), 108–128 (PLVL…WNLF), 184–204 (INYF…MVLL), and 270–290 (LYIC…AGMI).

Belongs to the pannexin family.

Its subcellular location is the cell membrane. It localises to the cell junction. The protein resides in the gap junction. Functionally, structural component of the gap junctions. This chain is Innexin-2 (inx-2), found in Caenorhabditis elegans.